The sequence spans 237 residues: Ribonuclease PH (237 aa).

Phosphate contacts are provided by residues Arg-86 and 124 to 126 (GTR).

The protein belongs to the RNase PH family. As to quaternary structure, homohexameric ring arranged as a trimer of dimers.

The catalysed reaction is tRNA(n+1) + phosphate = tRNA(n) + a ribonucleoside 5'-diphosphate. In terms of biological role, phosphorolytic 3'-5' exoribonuclease that plays an important role in tRNA 3'-end maturation. Removes nucleotide residues following the 3'-CCA terminus of tRNAs; can also add nucleotides to the ends of RNA molecules by using nucleoside diphosphates as substrates, but this may not be physiologically important. Probably plays a role in initiation of 16S rRNA degradation (leading to ribosome degradation) during starvation. The sequence is that of Ribonuclease PH from Zymomonas mobilis subsp. mobilis (strain ATCC 31821 / ZM4 / CP4).